The sequence spans 387 residues: Protein phosphatase 2C 50 (387 aa).

The PPM-type phosphatase domain maps to 60-377 (VWGCASTRGR…DNITVIVVDL (318 aa)). Residues Asp118 and Gly119 each coordinate Mn(2+). A Modulates binding affinity to PYR/PYL/RCAR abscisic acid intracellular receptors motif is present at residues 264-268 (VSGIL). Mn(2+) is bound by residues Asp306 and Asp368.

It belongs to the PP2C family. As to quaternary structure, interacts with PYL3, PYL5, PYL9 and PYL10. Binding to PYL3, PYL5, PYL9 and PYL10 is dependent on the presence of abscisic acid (ABA). Interacts with SAPK10. The cofactor is Mg(2+). Mn(2+) is required as a cofactor.

It catalyses the reaction O-phospho-L-seryl-[protein] + H2O = L-seryl-[protein] + phosphate. The enzyme catalyses O-phospho-L-threonyl-[protein] + H2O = L-threonyl-[protein] + phosphate. Its function is as follows. Protein phosphatase involved in abscisic acid (ABA) signaling. Together with PYL3 and SAPK10, may form an ABA signaling module involved in stress response. In Oryza sativa subsp. japonica (Rice), this protein is Protein phosphatase 2C 50.